The chain runs to 117 residues: Immunoglobulin kappa variable 1-17 (117 aa).

Residues 1–22 (MDMRVPAQLLGLLLLWFPGARC) form the signal peptide. The interval 23–45 (DIQMTQSPSSLSASVGDRVTITC) is framework-1. The Ig-like domain occupies 24–117 (IQMTQSPSSL…YYCLQHNSYP (94 aa)). An intrachain disulfide couples Cys-45 to Cys-110. The interval 46 to 56 (RASQGIRNDLG) is complementarity-determining-1. The interval 57–71 (WYQQKPGKAPKRLIY) is framework-2. A complementarity-determining-2 region spans residues 72–78 (AASSLQS). The segment at 79-110 (GVPSRFSGSGSGTEFTLTISSLQPEDFATYYC) is framework-3. The interval 111-117 (LQHNSYP) is complementarity-determining-3.

As to quaternary structure, immunoglobulins are composed of two identical heavy chains and two identical light chains; disulfide-linked.

It is found in the secreted. Its subcellular location is the cell membrane. In terms of biological role, v region of the variable domain of immunoglobulin light chains that participates in the antigen recognition. Immunoglobulins, also known as antibodies, are membrane-bound or secreted glycoproteins produced by B lymphocytes. In the recognition phase of humoral immunity, the membrane-bound immunoglobulins serve as receptors which, upon binding of a specific antigen, trigger the clonal expansion and differentiation of B lymphocytes into immunoglobulins-secreting plasma cells. Secreted immunoglobulins mediate the effector phase of humoral immunity, which results in the elimination of bound antigens. The antigen binding site is formed by the variable domain of one heavy chain, together with that of its associated light chain. Thus, each immunoglobulin has two antigen binding sites with remarkable affinity for a particular antigen. The variable domains are assembled by a process called V-(D)-J rearrangement and can then be subjected to somatic hypermutations which, after exposure to antigen and selection, allow affinity maturation for a particular antigen. In Homo sapiens (Human), this protein is Immunoglobulin kappa variable 1-17.